We begin with the raw amino-acid sequence, 692 residues long: UvrABC system protein B (692 aa).

A Helicase ATP-binding domain is found at 32–187; sequence ENIENGEKAQ…LLNDLVGIQF (156 aa). Residue 45-52 participates in ATP binding; that stretch reads GATGTGKT. A Beta-hairpin motif is present at residues 98–121; the sequence is YYDYYQPEAYVPSSDTYIEKDSSV. The Helicase C-terminal domain maps to 436–631; it reads QIDDLVGEIH…TIKKEIRDLI (196 aa). One can recognise a UVR domain in the interval 656-691; that stretch reads KALVKKLEKEMQQAAAALDFEGAAQLRDMVLELRAM.

It belongs to the UvrB family. As to quaternary structure, forms a heterotetramer with UvrA during the search for lesions. Interacts with UvrC in an incision complex.

The protein resides in the cytoplasm. Functionally, the UvrABC repair system catalyzes the recognition and processing of DNA lesions. A damage recognition complex composed of 2 UvrA and 2 UvrB subunits scans DNA for abnormalities. Upon binding of the UvrA(2)B(2) complex to a putative damaged site, the DNA wraps around one UvrB monomer. DNA wrap is dependent on ATP binding by UvrB and probably causes local melting of the DNA helix, facilitating insertion of UvrB beta-hairpin between the DNA strands. Then UvrB probes one DNA strand for the presence of a lesion. If a lesion is found the UvrA subunits dissociate and the UvrB-DNA preincision complex is formed. This complex is subsequently bound by UvrC and the second UvrB is released. If no lesion is found, the DNA wraps around the other UvrB subunit that will check the other stand for damage. The sequence is that of UvrABC system protein B from Lactococcus lactis subsp. cremoris (strain MG1363).